A 262-amino-acid chain; its full sequence is Virulence plasmid protein pGP6-D-related protein (262 aa).

It belongs to the UPF0137 (pGP6-D) family.

In Chlamydia muridarum (strain MoPn / Nigg), this protein is Virulence plasmid protein pGP6-D-related protein.